The following is a 170-amino-acid chain: Lipoprotein signal peptidase (170 aa).

3 helical membrane passes run 5-25 (IVGVIAIVLVFALDQVSKAYA), 62-82 (SNLIFTYVSLGVILMLFVLFV), and 89-111 (STICMGVVIGGALGNLADRLRFG). Catalysis depends on residues aspartate 115 and aspartate 133. Residues 126-146 (WPAFNFADVCVTCGVICFLCL) traverse the membrane as a helical segment.

It belongs to the peptidase A8 family.

It is found in the cell inner membrane. It catalyses the reaction Release of signal peptides from bacterial membrane prolipoproteins. Hydrolyzes -Xaa-Yaa-Zaa-|-(S,diacylglyceryl)Cys-, in which Xaa is hydrophobic (preferably Leu), and Yaa (Ala or Ser) and Zaa (Gly or Ala) have small, neutral side chains.. It functions in the pathway protein modification; lipoprotein biosynthesis (signal peptide cleavage). This protein specifically catalyzes the removal of signal peptides from prolipoproteins. The sequence is that of Lipoprotein signal peptidase from Anaplasma marginale (strain Florida).